We begin with the raw amino-acid sequence, 145 residues long: Synaptojanin-2-binding protein (145 aa).

The Cytoplasmic portion of the chain corresponds to 1-117 (MNGRVDYLVT…GHRGEGDPSG (117 aa)). The PDZ domain occupies 13 to 100 (EINLTRGPSG…AVSLRVQHRL (88 aa)). Residues 118–138 (IPIFMVLVPVFALTMVAAWAF) traverse the membrane as a helical segment. At 139-145 (MRYRQQL) the chain is on the mitochondrial intermembrane side.

As to quaternary structure, binds (via the PDZ domain) to isoform 2A of SYNJ2 (via the unique motif in the C-terminus). Interacts (via C-terminus) with RALBP1. Interacts (via PDZ domain) with ACVR2A (via C-terminus) and ACVR2B (via C-terminus). Forms a ternary complex with ACVR2A and RALBP1. Interacts with MAPK12. Interacts with DLL1; enhances DLL1 protein stability, and promotes notch signaling in endothelial cells.

The protein localises to the mitochondrion outer membrane. In terms of biological role, regulates endocytosis of activin type 2 receptor kinases through the Ral/RALBP1-dependent pathway and may be involved in suppression of activin-induced signal transduction. This chain is Synaptojanin-2-binding protein (SYNJ2BP), found in Homo sapiens (Human).